The primary structure comprises 625 residues: 1-deoxy-D-xylulose-5-phosphate synthase (625 aa).

Thiamine diphosphate is bound by residues histidine 80 and 121–123 (GHS). Position 152 (aspartate 152) interacts with Mg(2+). Residues 153 to 154 (GA), asparagine 181, tyrosine 288, and glutamate 370 each bind thiamine diphosphate. Mg(2+) is bound at residue asparagine 181.

Belongs to the transketolase family. DXPS subfamily. Homodimer. Mg(2+) is required as a cofactor. Requires thiamine diphosphate as cofactor.

The catalysed reaction is D-glyceraldehyde 3-phosphate + pyruvate + H(+) = 1-deoxy-D-xylulose 5-phosphate + CO2. It functions in the pathway metabolic intermediate biosynthesis; 1-deoxy-D-xylulose 5-phosphate biosynthesis; 1-deoxy-D-xylulose 5-phosphate from D-glyceraldehyde 3-phosphate and pyruvate: step 1/1. Catalyzes the acyloin condensation reaction between C atoms 2 and 3 of pyruvate and glyceraldehyde 3-phosphate to yield 1-deoxy-D-xylulose-5-phosphate (DXP). The protein is 1-deoxy-D-xylulose-5-phosphate synthase of Alteromonas mediterranea (strain DSM 17117 / CIP 110805 / LMG 28347 / Deep ecotype).